A 274-amino-acid polypeptide reads, in one-letter code: Large ribosomal subunit protein uL2cz/uL2cy (274 aa).

2 disordered regions span residues 1–24 (MAIH…QVKS) and 223–274 (MNPV…RRSK). Residues 7–24 (KTSTPSTRNGTVDSQVKS) are compositionally biased toward polar residues.

The protein belongs to the universal ribosomal protein uL2 family. Part of the 50S ribosomal subunit.

The protein localises to the plastid. It is found in the chloroplast. This Nicotiana sylvestris (Wood tobacco) protein is Large ribosomal subunit protein uL2cz/uL2cy (rpl2-A).